Here is a 1418-residue protein sequence, read N- to C-terminus: Ankyrin repeat and fibronectin type-III domain-containing protein 1 (1418 aa).

The segment at 119–236 (RDSVCSLPPP…DRGETPSLSE (118 aa)) is disordered. Residues 144 to 154 (PENTSINLSQC) are compositionally biased toward polar residues. Positions 171–186 (SASPTSSTPLRTTSTP) are enriched in low complexity. Positions 223–236 (LRDHDRGETPSLSE) are enriched in basic and acidic residues. 2 ANK repeats span residues 419 to 450 (QSSEALFEAVEQQDLDAVQILLFQYTADELDL) and 456 to 485 (EGLTPLDISIMTNNVPIAKLLLKAGGKESP). In terms of domain architecture, Fibronectin type-III spans 556 to 652 (APLMVRLSVT…LSQPPSAVPS (97 aa)). The tract at residues 893 to 900 (GLYLGYLK) is highly conserved peptide sequence. Disordered regions lie at residues 1134–1179 (VQKN…EVFL), 1321–1343 (LETPLSIPHSPTTSYSLDEYRQP), and 1361–1418 (KTSP…SSTL). The segment covering 1136–1146 (KNDSTSSNTDY) has biased composition (polar residues). Positions 1407 to 1418 (NEQVSEILSSTL) are enriched in polar residues.

Required for vestibular-related functions. The protein is Ankyrin repeat and fibronectin type-III domain-containing protein 1 (ankfn1) of Danio rerio (Zebrafish).